Here is a 606-residue protein sequence, read N- to C-terminus: Pescadillo homolog (606 aa).

The 102-residue stretch at 346–447 (LSTSLFSPYT…KILLEGPYGQ (102 aa)) folds into the BRCT domain. Positions 461–497 (YEGAYDPAAGPLGPSGVEQESESEADEVSEEDEEDQG) are disordered. Positions 479-496 (QESESEADEVSEEDEEDQ) are enriched in acidic residues.

The protein belongs to the pescadillo family. As to quaternary structure, component of the NOP7 complex, composed of ERB1, NOP7 and YTM1. The complex is held together by ERB1, which interacts with NOP7 via its N-terminal domain and with YTM1 via a high-affinity interaction between the seven-bladed beta-propeller domains of the 2 proteins. The NOP7 complex associates with the 66S pre-ribosome.

The protein resides in the nucleus. Its subcellular location is the nucleolus. It localises to the nucleoplasm. Its function is as follows. Component of the NOP7 complex, which is required for maturation of the 25S and 5.8S ribosomal RNAs and formation of the 60S ribosome. This Laccaria bicolor (strain S238N-H82 / ATCC MYA-4686) (Bicoloured deceiver) protein is Pescadillo homolog.